Reading from the N-terminus, the 217-residue chain is 3,4-dihydroxy-2-butanone 4-phosphate synthase (217 aa).

D-ribulose 5-phosphate-binding positions include 37–38 (RE), Asp42, 150–154 (RRGHT), and Glu174. Residue Glu38 participates in Mg(2+) binding. Mg(2+) is bound at residue His153.

The protein belongs to the DHBP synthase family. Homodimer. Mg(2+) is required as a cofactor. The cofactor is Mn(2+).

It catalyses the reaction D-ribulose 5-phosphate = (2S)-2-hydroxy-3-oxobutyl phosphate + formate + H(+). It functions in the pathway cofactor biosynthesis; riboflavin biosynthesis; 2-hydroxy-3-oxobutyl phosphate from D-ribulose 5-phosphate: step 1/1. Catalyzes the conversion of D-ribulose 5-phosphate to formate and 3,4-dihydroxy-2-butanone 4-phosphate. This Shewanella woodyi (strain ATCC 51908 / MS32) protein is 3,4-dihydroxy-2-butanone 4-phosphate synthase.